The sequence spans 765 residues: Phosphoribosylformylglycinamidine synthase subunit PurL (765 aa).

Over residues 1 to 13 (MTVSPTSAPTQAI) the composition is skewed to polar residues. The segment at 1-32 (MTVSPTSAPTQAIDTVERAATTPDEPQPFGEL) is disordered. Residue His65 is part of the active site. ATP-binding residues include Tyr68 and Lys112. Residue Glu114 participates in Mg(2+) binding. Substrate is bound by residues 115–118 (SHNH) and Arg137. His116 serves as the catalytic Proton acceptor. Position 138 (Asp138) interacts with Mg(2+). Gln263 provides a ligand contact to substrate. A Mg(2+)-binding site is contributed by Asp291. Residue 335–337 (ESQ) participates in substrate binding. Residues Asn523 and Gly560 each contribute to the ATP site. Residue Asn561 participates in Mg(2+) binding. Ser563 is a substrate binding site.

It belongs to the FGAMS family. In terms of assembly, monomer. Part of the FGAM synthase complex composed of 1 PurL, 1 PurQ and 2 PurS subunits.

It is found in the cytoplasm. The catalysed reaction is N(2)-formyl-N(1)-(5-phospho-beta-D-ribosyl)glycinamide + L-glutamine + ATP + H2O = 2-formamido-N(1)-(5-O-phospho-beta-D-ribosyl)acetamidine + L-glutamate + ADP + phosphate + H(+). It participates in purine metabolism; IMP biosynthesis via de novo pathway; 5-amino-1-(5-phospho-D-ribosyl)imidazole from N(2)-formyl-N(1)-(5-phospho-D-ribosyl)glycinamide: step 1/2. Part of the phosphoribosylformylglycinamidine synthase complex involved in the purines biosynthetic pathway. Catalyzes the ATP-dependent conversion of formylglycinamide ribonucleotide (FGAR) and glutamine to yield formylglycinamidine ribonucleotide (FGAM) and glutamate. The FGAM synthase complex is composed of three subunits. PurQ produces an ammonia molecule by converting glutamine to glutamate. PurL transfers the ammonia molecule to FGAR to form FGAM in an ATP-dependent manner. PurS interacts with PurQ and PurL and is thought to assist in the transfer of the ammonia molecule from PurQ to PurL. This is Phosphoribosylformylglycinamidine synthase subunit PurL from Mycobacterium avium (strain 104).